The following is a 59-amino-acid chain: MAVQQNRKTPSKRGMRRSHDALSGPALSVEPQTGETHRRHHVSPDGYYRGRKVMQGRED.

Residues 1-59 (MAVQQNRKTPSKRGMRRSHDALSGPALSVEPQTGETHRRHHVSPDGYYRGRKVMQGRED) are disordered. The span at 49 to 59 (RGRKVMQGRED) shows a compositional bias: basic residues.

Belongs to the bacterial ribosomal protein bL32 family.

This Alkalilimnicola ehrlichii (strain ATCC BAA-1101 / DSM 17681 / MLHE-1) protein is Large ribosomal subunit protein bL32.